A 626-amino-acid chain; its full sequence is Glucoamylase (626 aa).

The first 19 residues, 1–19 (MHLVSSLLVVGAAFQAVLG), serve as a signal peptide directing secretion. Residues 20-35 (LPDPLHEKRHSDIIKR) constitute a propeptide that is removed on maturation. An N-linked (GlcNAc...) asparagine glycan is attached at Asn106. Trp155 contributes to the substrate binding site. The N-linked (GlcNAc...) asparagine glycan is linked to Asn206. Catalysis depends on Asp211, which acts as the Proton acceptor. The active-site Proton donor is the Glu214. Asn217 carries N-linked (GlcNAc...) asparagine glycosylation. The CBM20 domain occupies 520–626 (CAADHEVLVT…STATLDDTWR (107 aa)).

The protein belongs to the glycosyl hydrolase 15 family.

The enzyme catalyses Hydrolysis of terminal (1-&gt;4)-linked alpha-D-glucose residues successively from non-reducing ends of the chains with release of beta-D-glucose.. This Neurospora crassa (strain ATCC 24698 / 74-OR23-1A / CBS 708.71 / DSM 1257 / FGSC 987) protein is Glucoamylase (gla-1).